The chain runs to 809 residues: Mediator of RNA polymerase II transcription subunit 15 (809 aa).

Disordered stretches follow at residues 115–137, 183–211, and 413–549; these read AMQG…QMIQ, QLQQ…QQNQ, and GQMM…ASQS. A compositionally biased stretch (gly residues) spans 119–128; sequence VAGGQQGAGA. Over residues 446–467 the composition is skewed to low complexity; the sequence is QQMPQAQQMMSSPSPVQVQTPQ. Residues 468-484 are compositionally biased toward pro residues; the sequence is SMPPPPQPQPSPQPPSS. 2 stretches are compositionally biased toward low complexity: residues 485 to 502 and 510 to 520; these read QPNS…GFQP and QSPASSRTPQS. Residues 533-549 show a composition bias toward polar residues; sequence TPGNPSSVMSPAGASQS.

Belongs to the Mediator complex subunit 15 family. In terms of assembly, component of the Mediator complex. Interacts with srebf1 and srebf2. Interacts with smad2, smad3 and smad4.

The protein localises to the cytoplasm. Its subcellular location is the nucleus. Functionally, component of the Mediator complex, a coactivator involved in the regulated transcription of nearly all RNA polymerase II-dependent genes. Mediator functions as a bridge to convey information from gene-specific regulatory proteins to the basal RNA polymerase II transcription machinery. Mediator is recruited to promoters by direct interactions with regulatory proteins and serves as a scaffold for the assembly of a functional preinitiation complex with RNA polymerase II and the general transcription factors. Required for cholesterol-dependent gene regulation. Positively regulates the Nodal signaling pathway. The chain is Mediator of RNA polymerase II transcription subunit 15 (med15) from Danio rerio (Zebrafish).